A 145-amino-acid chain; its full sequence is Flagellar assembly factor FliW (145 aa).

The protein belongs to the FliW family. In terms of assembly, interacts with translational regulator CsrA and flagellin(s).

Its subcellular location is the cytoplasm. Its function is as follows. Acts as an anti-CsrA protein, binds CsrA and prevents it from repressing translation of its target genes, one of which is flagellin. Binds to flagellin and participates in the assembly of the flagellum. This Clostridium kluyveri (strain NBRC 12016) protein is Flagellar assembly factor FliW.